We begin with the raw amino-acid sequence, 535 residues long: RNA-splicing ligase RtcB homolog 1 (535 aa).

Basic residues predominate over residues 1 to 16; that stretch reads MAKSRYSRKNKGKKLQ. Residues 1–29 form a disordered region; the sequence is MAKSRYSRKNKGKKLQRVQENTVSTEEKS. Positions 152, 155, 260, 292, and 383 each coordinate Mn(2+). A GMP-binding site is contributed by 259–263; sequence NHYLE. GMP contacts are provided by residues 383-384, 432-435, serine 439, 458-461, and lysine 534; these read HN, GGSM, and HGAG. Histidine 458 acts as the GMP-histidine intermediate in catalysis.

It belongs to the RtcB family. Catalytic component of the tRNA-splicing ligase complex. It depends on Mn(2+) as a cofactor.

The enzyme catalyses a 3'-end 3'-phospho-ribonucleotide-RNA + a 5'-end dephospho-ribonucleoside-RNA + GTP = a ribonucleotidyl-ribonucleotide-RNA + GMP + diphosphate. It catalyses the reaction a 3'-end 2',3'-cyclophospho-ribonucleotide-RNA + a 5'-end dephospho-ribonucleoside-RNA + GTP + H2O = a ribonucleotidyl-ribonucleotide-RNA + GMP + diphosphate + H(+). Its function is as follows. Catalytic subunit of the tRNA-splicing ligase complex that acts by directly joining spliced tRNA halves to mature-sized tRNAs by incorporating the precursor-derived splice junction phosphate into the mature tRNA as a canonical 3',5'-phosphodiester. May act as an RNA ligase with broad substrate specificity, and may function toward other RNAs. In Entamoeba dispar (strain ATCC PRA-260 / SAW760), this protein is RNA-splicing ligase RtcB homolog 1.